The chain runs to 327 residues: MTVLPASIRIEPHGRLAPALLPRVFALVDDATDTDGVQPLSEHVVLHLRYGGDERGCNLLLWVDDDEPRLAGYAHLDATDPVEAPSAELVIAPDFRGRGLGTMLVEAILARTGGRLRLWAHGELPAAQAMARRLGFARRRVLLQMRRDLFAPLPPVTLPDDVQIRTFRPGADDDAWIALNARAFADHPEQGSWTLEDLHRRMQESWFDPDGFFLAERDGELVGFHWTKVHGSPAGQASNGSSGHGHEPLGEVYILGVDPKAQGLGLGRALTIVGLRYLRSRRLPHVMLYVDATNAPAIRLYESLGFRHWGTDVLFERGGTANGEGTS.

2 N-acetyltransferase domains span residues 11-159 and 162-327; these read EPHG…VTLP and VQIR…EGTS. Residue Glu42 participates in 1D-myo-inositol 2-(L-cysteinylamino)-2-deoxy-alpha-D-glucopyranoside binding. 89-91 provides a ligand contact to acetyl-CoA; it reads LVI. 1D-myo-inositol 2-(L-cysteinylamino)-2-deoxy-alpha-D-glucopyranoside-binding residues include Glu189, Lys228, and Glu251. Acetyl-CoA-binding positions include 255 to 257 and 262 to 268; these read LGV and QGLGLGR. Tyr289 contributes to the 1D-myo-inositol 2-(L-cysteinylamino)-2-deoxy-alpha-D-glucopyranoside binding site. 294-299 serves as a coordination point for acetyl-CoA; that stretch reads NAPAIR.

This sequence belongs to the acetyltransferase family. MshD subfamily. As to quaternary structure, monomer.

The catalysed reaction is 1D-myo-inositol 2-(L-cysteinylamino)-2-deoxy-alpha-D-glucopyranoside + acetyl-CoA = mycothiol + CoA + H(+). Catalyzes the transfer of acetyl from acetyl-CoA to desacetylmycothiol (Cys-GlcN-Ins) to form mycothiol. The protein is Mycothiol acetyltransferase of Acidothermus cellulolyticus (strain ATCC 43068 / DSM 8971 / 11B).